A 68-amino-acid polypeptide reads, in one-letter code: Stage III sporulation protein AC (68 aa).

2 helical membrane-spanning segments follow: residues 5 to 25 and 33 to 53; these read VNVIFQIAGVGIVVAFLHTIL and YAQWVTLLGFIYILFMVATIV.

The protein localises to the cell membrane. The sequence is that of Stage III sporulation protein AC (spoIIIAC) from Bacillus subtilis (strain 168).